We begin with the raw amino-acid sequence, 330 residues long: Probable integrase/recombinase protein MJ0367 (330 aa).

One can recognise a Core-binding (CB) domain in the interval 22-112 (IEETDKIKEY…LLKVFYRVLR (91 aa)). A Tyr recombinase domain is found at 136 to 325 (QHYDAVDAEM…RAESLEFIKK (190 aa)). Active-site residues include Arg177, Lys202, His275, Arg278, and His301. Residue Tyr310 is the O-(3'-phospho-DNA)-tyrosine intermediate of the active site.

The protein belongs to the 'phage' integrase family.

This Methanocaldococcus jannaschii (strain ATCC 43067 / DSM 2661 / JAL-1 / JCM 10045 / NBRC 100440) (Methanococcus jannaschii) protein is Probable integrase/recombinase protein MJ0367.